Reading from the N-terminus, the 158-residue chain is SsrA-binding protein (158 aa).

It belongs to the SmpB family.

The protein resides in the cytoplasm. In terms of biological role, required for rescue of stalled ribosomes mediated by trans-translation. Binds to transfer-messenger RNA (tmRNA), required for stable association of tmRNA with ribosomes. tmRNA and SmpB together mimic tRNA shape, replacing the anticodon stem-loop with SmpB. tmRNA is encoded by the ssrA gene; the 2 termini fold to resemble tRNA(Ala) and it encodes a 'tag peptide', a short internal open reading frame. During trans-translation Ala-aminoacylated tmRNA acts like a tRNA, entering the A-site of stalled ribosomes, displacing the stalled mRNA. The ribosome then switches to translate the ORF on the tmRNA; the nascent peptide is terminated with the 'tag peptide' encoded by the tmRNA and targeted for degradation. The ribosome is freed to recommence translation, which seems to be the essential function of trans-translation. The protein is SsrA-binding protein of Bartonella tribocorum (strain CIP 105476 / IBS 506).